Here is a 187-residue protein sequence, read N- to C-terminus: Large ribosomal subunit protein uL24c (187 aa).

Residues 1–41 constitute a chloroplast transit peptide; the sequence is MAALQSSFAGLSTSFFGQRFSPPLSLPPLVKSTEGPCLIQA.

Belongs to the universal ribosomal protein uL24 family. Part of the 50S ribosomal subunit.

It is found in the plastid. Its subcellular location is the chloroplast. Its function is as follows. One of two assembly initiator proteins, it binds directly to the 5'-end of the 23S rRNA, where it nucleates assembly of the 50S subunit. This Nicotiana tabacum (Common tobacco) protein is Large ribosomal subunit protein uL24c (RPL24).